We begin with the raw amino-acid sequence, 250 residues long: 5'-nucleotidase SurE (250 aa).

Residues aspartate 8, aspartate 9, serine 39, and asparagine 91 each contribute to the a divalent metal cation site.

This sequence belongs to the SurE nucleotidase family. Requires a divalent metal cation as cofactor.

The protein resides in the cytoplasm. It carries out the reaction a ribonucleoside 5'-phosphate + H2O = a ribonucleoside + phosphate. Nucleotidase that shows phosphatase activity on nucleoside 5'-monophosphates. This Leptospira borgpetersenii serovar Hardjo-bovis (strain L550) protein is 5'-nucleotidase SurE.